Consider the following 1184-residue polypeptide: Calcium-activated potassium channel subunit alpha-1a (1184 aa).

Residues 1–39 are Extracellular-facing; sequence MSNNINFNKNPDSSVSISKMDVIIPFTPDVPCDNNGQRM. A helical membrane pass occupies residues 40–60; that stretch reads WWAFLASSMVTFFGGLFIILL. Over 61 to 132 the chain is Cytoplasmic; the sequence is WRTLKYLWTV…MISAQTLTGR (72 aa). S-palmitoyl cysteine attachment occurs at residues Cys-71, Cys-72, and Cys-74. The chain crosses the membrane as a helical span at residues 133-153; it reads VLVVLVFALSIGALGIYFIDS. Over 154 to 168 the chain is Extracellular; it reads SDPIESCQNFYKDFT. The helical transmembrane segment at 169–189 threads the bilayer; it reads LQIDMAFNVFFLLYFGLRFIA. The Cytoplasmic portion of the chain corresponds to 190-193; it reads ANDK. A helical transmembrane segment spans residues 194 to 214; sequence LWFWLEVNSVVDFFTVPPVFV. Residues 215–254 lie on the Extracellular side of the membrane; it reads SVYLNRSWLGLRFLRALRLIQFSEILQFLNILKTSNSIKL. Residues 255–275 traverse the membrane as a helical segment; that stretch reads VNLCSIFISTWLTAAGFIHLV. Over 276–289 the chain is Cytoplasmic; sequence ENSGDPWENFQNSQ. The helical transmembrane segment at 290–310 threads the bilayer; the sequence is PLSYWECVYLLMVTMSTVGYG. At 311–321 the chain is on the extracellular side; that stretch reads DVYARTTLGRL. A helical membrane pass occupies residues 322-342; sequence FMVFFILGGLAMFASYVPEII. The Cytoplasmic portion of the chain corresponds to 343–1184; sequence ELIGNRKKYG…PPIREVEDEC (842 aa). In terms of domain architecture, RCK N-terminal 1 spans 361 to 503; it reads RKHIVVCGHI…WNWKEGDDAI (143 aa). The Mg(2+) site is built by Glu-393, Gln-416, and Glu-418. Asn-468 serves as a coordination point for Ca(2+). The tract at residues 655-677 is disordered; the sequence is EHPSTLSPKKKQRNGGMRNSPNC. Thr-659 carries the phosphothreonine modification. Ser-661, Ser-674, and Ser-678 each carry phosphoserine. Residues 735–879 enclose the RCK N-terminal 2 domain; that stretch reads SGHVVVCIFG…MDRSSPDNSP (145 aa). Thr-866 is subject to Phosphothreonine. 2 positions are modified to phosphoserine: Ser-874 and Ser-878. Ca(2+) is bound by residues Gln-908, Asp-911, Asp-914, and Asp-916. The short motif at 908 to 916 is the Calcium bowl element; that stretch reads QFLDQDDDD. The tract at residues 1082–1143 is disordered; the sequence is RASLSHSSHS…PEKRWFTDEA (62 aa). The span at 1084 to 1104 shows a compositional bias: low complexity; the sequence is SLSHSSHSSHSSSKKSSSVHS. A compositionally biased stretch (basic and acidic residues) spans 1116 to 1125; sequence KAREARDKQN.

Belongs to the potassium channel family. Calcium-activated (TC 1.A.1.3) subfamily. KCa1.1/KCNMA1 sub-subfamily. Homotetramer; which constitutes the calcium-activated potassium channel. Post-translationally, phosphorylated. Palmitoylated.

It is found in the cell membrane. The catalysed reaction is K(+)(in) = K(+)(out). Functionally, potassium channel activated by both membrane depolarization or increase in cytosolic Ca(2+) that mediates export of K(+). It is also activated by the concentration of cytosolic Mg(2+). Its activation dampens the excitatory events that elevate the cytosolic Ca(2+) concentration and/or depolarize the cell membrane. It therefore contributes to repolarization of the membrane potential. Involved in determining peripheral auditory sensitivity. The polypeptide is Calcium-activated potassium channel subunit alpha-1a (Danio rerio (Zebrafish)).